We begin with the raw amino-acid sequence, 1487 residues long: MASQRSDFAPDLYDFIESNDFGEDPLIRAASAAEEGFTQPAAPDLLYGSQNMFGVDDAPLSTPAVVIPPPSPTPEPRGGKAKRSPSAAGSGGPPTPAAAAQPASPAPSPAPGLAAMLKMVHSSVAPGNGRRATGSSSPGGGDAADPVALDSDTETCPGSPQPEFPSSASPGGGSPAPRVRSISISSSSSSSSSMDEDDQADGAGASSSSSSSSDDSDSDEGGEEETPRPRHSQNAAKTPSAAGSPGPSSGGDRPAAGAATPKSCRSGAASPGAPAPAPASAPAPSRPGGGLLPPGARILEYLEGVREANLAKTLERPEPPAGMASPPGRSPHRLPKDQRPKSALAGASKRKRANPRPIPQTQTQAPAEEAPQTAVWDLLDMNSSQATGAAAAAASAPAAASCAPGVYQREPLLTPSGDPWPGSDPPPMGRVRYGGTGDSRDGLWDDPEIVLAASRYAEAQAPVPVFVPEMGDSTKQYNALVRMVFESREAMSWLQNSKLSGQDQNLAQFCQKFIHAPRGHGSFITGSVANPLPHIGDAMAAGNALWALPHAAASVAMSRRYDRTQKSFILQSLRRAYADMAYPRDEAGRPDSLAAVAGYPAQAAAAAASQQQPEAPAPSVRVREAYTRVCAALGPRRKAAAAAAAPGTRAPRPSAFRLRELGDACVLACQAVFEALLRLRGGASAVPGLDPSEIPSPACPPEALCSNPAGLETAALSLYELRDLVERARLLGDSDPTHRLGSDELRLAVRAVLVVARTVAPLVRYNAEGARARASAWTVTQAVFSIPSLVGGMLGEAVSLLAPPTRSQQPSSSSPGGEPFSGSAAAEGSLQTLPPLWPTVPGKQSATVPSSHSQSPQHSQSGGGAGATTATCCRATQTNARSRGQQHQPQKARSPQAAASPAHLSQEAMPGSSSDDRAIHGRPRGKSGKRRSEPLEPAAQAGASASFSSSARGYDPSGPVDSPPAPKRRVATPGHQAPRALGPMPAEGPDRRGGFRRVPRGDCHTPRPSDAACAAYCPPELVAELIDNQLFPEAWRPALTFDPQALATIAARCSGPPARDGARFGELAASGPLRRRAAWMHQIPDPEDVKVVVLYSPLQDEDLLGGLPASRPGGSRREPLWSDLKGGLSALLAALGNRILTKRSHAWAGNWTGAPDVSALNAQGVLLLSTGDLAFTGCVEYLCLRLGSARRKLLVLDAVSTEDWPQDGPAISQYHIYMRAALTPRVACAVRWPRERHLSRAVLTSSTLFGPGLFARAEAAFARLYPDSAPLRLCRSSNVAYTVDTRAGERTRVPLAPREYRQRVLPDYDGCKDMRAQAEGLGFHDPDFEEGAAQSHRAANRWGLGAWLRPVYLACGRRGAGAVEPSELLIPELLSEFCRVALLEPDAEAEPLVLPITEAPRRRAPRVDWEPGFGSRSTSVLHMGATELCLPEPDDELEIDGAGDVELVVEHPGPSPGVAQALRRAPIKIEVVSDDEDGGDWCNPYLS.

Disordered regions lie at residues 41 to 295 (AAPD…LPPG), 310 to 370 (LAKT…AEEA), and 803 to 1007 (PPTR…HTPR). Residues 66–75 (VIPPPSPTPE) are compositionally biased toward pro residues. Composition is skewed to low complexity over residues 165–193 (PSSA…SSSS) and 201–213 (DGAG…SSSS). Residues 214–224 (DDSDSDEGGEE) show a composition bias toward acidic residues. Low complexity predominate over residues 235 to 272 (AAKTPSAAGSPGPSSGGDRPAAGAATPKSCRSGAASPG). Pro residues predominate over residues 273–285 (APAPAPASAPAPS). Low complexity-rich tracts occupy residues 807 to 829 (SQQP…AEGS), 849 to 860 (PSSHSQSPQHSQ), and 867 to 877 (ATTATCCRATQ). Residues 878 to 893 (TNARSRGQQHQPQKAR) are compositionally biased toward polar residues. Residues 920–929 (HGRPRGKSGK) are compositionally biased toward basic residues. Residues 938 to 951 (AAQAGASASFSSSA) show a composition bias toward low complexity. A compositionally biased stretch (basic and acidic residues) spans 988 to 1007 (GPDRRGGFRRVPRGDCHTPR).

Belongs to the herpesviridae ICP4 family. In terms of processing, a long stretch of serine residues may be a major site of phosphorylation.

The protein resides in the host nucleus. Functionally, this IE protein is a multifunctional protein capable of migrating to the nucleus, binding to DNA, trans-activating other viral genes, and autoregulating its own synthesis. The sequence is that of Major viral transcription factor (IE) from Equine herpesvirus 1 (strain Ab4p) (EHV-1).